The following is a 236-amino-acid chain: E3 ubiquitin-protein ligase ATL41 (236 aa).

The chain crosses the membrane as a helical span at residues 31–51 (IMLAAVASLSGVILIVFALHL). Residues 108-150 (CAVCLSVLKEQDKARELPNCKHIFHVDCVDTWLTTCSTCPVCR) form an RING-type; atypical zinc finger.

The protein belongs to the RING-type zinc finger family. ATL subfamily.

It localises to the membrane. The enzyme catalyses S-ubiquitinyl-[E2 ubiquitin-conjugating enzyme]-L-cysteine + [acceptor protein]-L-lysine = [E2 ubiquitin-conjugating enzyme]-L-cysteine + N(6)-ubiquitinyl-[acceptor protein]-L-lysine.. Its pathway is protein modification; protein ubiquitination. E3 ubiquitin-protein ligase able to catalyze polyubiquitination with ubiquitin-conjugating enzyme E2 UBC8, UBC10, UBC11, UBC28, UBC29, UBC30, UBC35 and UBC36 in vitro. The sequence is that of E3 ubiquitin-protein ligase ATL41 (ATL41) from Arabidopsis thaliana (Mouse-ear cress).